Here is a 200-residue protein sequence, read N- to C-terminus: Adenylyl-sulfate kinase (200 aa).

36–43 (GLSGSGKS) contributes to the ATP binding site. Ser110 serves as the catalytic Phosphoserine intermediate.

Belongs to the APS kinase family.

The catalysed reaction is adenosine 5'-phosphosulfate + ATP = 3'-phosphoadenylyl sulfate + ADP + H(+). The protein operates within sulfur metabolism; hydrogen sulfide biosynthesis; sulfite from sulfate: step 2/3. Its function is as follows. Catalyzes the synthesis of activated sulfate. The polypeptide is Adenylyl-sulfate kinase (Clostridium acetobutylicum (strain ATCC 824 / DSM 792 / JCM 1419 / IAM 19013 / LMG 5710 / NBRC 13948 / NRRL B-527 / VKM B-1787 / 2291 / W)).